The sequence spans 208 residues: MTEDDCKVAEALNVSRETLGKLEQYADLVRKWNSAINLIGRSTEGQIWIRHIQDSAQLWGLRAAPFGTWLDLGSGGGLPGIVLATIATEKAPESRFVLVESDQRKATFLRTAARTLCLNVTVHAARVEQLPPQRADVISARALAPLTDLCALAAPHLAPEGMCLFPKGANYASEIAAARLSWNMEPEIHPSVTDPSAVILKLKAMAHV.

S-adenosyl-L-methionine contacts are provided by residues glycine 73, leucine 78, 127–128, and arginine 141; that span reads VE.

The protein belongs to the methyltransferase superfamily. RNA methyltransferase RsmG family.

Its subcellular location is the cytoplasm. The catalysed reaction is guanosine(527) in 16S rRNA + S-adenosyl-L-methionine = N(7)-methylguanosine(527) in 16S rRNA + S-adenosyl-L-homocysteine. Functionally, specifically methylates the N7 position of guanine in position 527 of 16S rRNA. The chain is Ribosomal RNA small subunit methyltransferase G from Cereibacter sphaeroides (strain ATCC 17025 / ATH 2.4.3) (Rhodobacter sphaeroides).